The following is a 31-amino-acid chain: Photosystem II reaction center protein T (31 aa).

A helical membrane pass occupies residues 3–23 (SFAYILILAFSIGTLFFAIAL).

This sequence belongs to the PsbT family. In terms of assembly, PSII is composed of 1 copy each of membrane proteins PsbA, PsbB, PsbC, PsbD, PsbE, PsbF, PsbH, PsbI, PsbJ, PsbK, PsbL, PsbM, PsbT, PsbX, PsbY, PsbZ, Psb30/Ycf12, peripheral proteins PsbO, CyanoQ (PsbQ), PsbU, PsbV and a large number of cofactors. It forms dimeric complexes.

The protein resides in the cellular thylakoid membrane. Functionally, found at the monomer-monomer interface of the photosystem II (PS II) dimer, plays a role in assembly and dimerization of PSII. PSII is a light-driven water plastoquinone oxidoreductase, using light energy to abstract electrons from H(2)O, generating a proton gradient subsequently used for ATP formation. In Synechococcus sp. (strain RCC307), this protein is Photosystem II reaction center protein T.